The following is a 233-amino-acid chain: UPF0758 protein RoseRS_0767 (233 aa).

Positions 107–229 constitute an MPN domain; that stretch reads LIRSPTDAAQ…FVSMRERGLG (123 aa). Zn(2+)-binding residues include His-178, His-180, and Asp-191. The JAMM motif signature appears at 178 to 191; that stretch reads HNHPSGDPTPSPED.

It belongs to the UPF0758 family.

This chain is UPF0758 protein RoseRS_0767, found in Roseiflexus sp. (strain RS-1).